The sequence spans 129 residues: NADPH-dependent 7-cyano-7-deazaguanine reductase (129 aa).

C42 (thioimide intermediate) is an active-site residue. Catalysis depends on D49, which acts as the Proton donor. Substrate-binding positions include 64–66 (VEL) and 83–84 (HE).

The protein belongs to the GTP cyclohydrolase I family. QueF type 1 subfamily.

The protein resides in the cytoplasm. It catalyses the reaction 7-aminomethyl-7-carbaguanine + 2 NADP(+) = 7-cyano-7-deazaguanine + 2 NADPH + 3 H(+). It participates in tRNA modification; tRNA-queuosine biosynthesis. Functionally, catalyzes the NADPH-dependent reduction of 7-cyano-7-deazaguanine (preQ0) to 7-aminomethyl-7-deazaguanine (preQ1). The polypeptide is NADPH-dependent 7-cyano-7-deazaguanine reductase (Synechococcus sp. (strain CC9605)).